The primary structure comprises 415 residues: Phakinin (415 aa).

Residues 1–26 are disordered; it reads MSTRRVVVDAPAGASSSMPLQRHKAS. Ser2 bears the N-acetylserine mark. Positions 2–114 are head; the sequence is STRRVVVDAP…LGAVEDLGGC (113 aa). Residues Ser26, Ser32, and Ser35 each carry the phosphoserine modification. Position 53 is a phosphothreonine (Thr53). Ser90 and Ser100 each carry phosphoserine. Positions 104-415 constitute an IF rod domain; that stretch reads DLGAVEDLGG…HALLDREESS (312 aa). Coiled coils occupy residues 115 to 144, 199 to 248, and 295 to 395; these read LVEYMAKVHALEKVSQELEAQLRMHLESKA, RKAA…VKML, and QAKQ…LSHK. Residues 396 to 415 are tail; sequence CQLQRDVASYHALLDREESS.

Belongs to the intermediate filament family. Part of a complex required for lens intermediate filament formation composed of BFSP1, BFSP2 and CRYAA. Found in a complex composed of PPL (via C-terminal linker domain), BFSP1 and BFSP2 in the retinal lens. Within the complex interacts with PPL (via C-terminal linker domain) and with BFSP1. Identified in a complex that contains VIM, EZR, AHNAK, BFSP1, BFSP2, ANK2, PLEC, PRX and spectrin. Interacts with LGSN. Interacts with VIM. Abundantly expressed in both the inner and outer cortex of the retina, expressed at a lower level in the nucleus of the retina (at protein level). Detected in eye lens fiber cells (at protein level).

Its subcellular location is the cell membrane. It localises to the cytoplasm. The protein localises to the cytoskeleton. It is found in the cell cortex. In terms of biological role, required for the correct formation of lens intermediate filaments as part of a complex composed of BFSP1, BFSP2 and CRYAA. Plays a role in maintenance of retinal lens optical clarity. The sequence is that of Phakinin (BFSP2) from Bos taurus (Bovine).